A 310-amino-acid chain; its full sequence is Methionyl-tRNA formyltransferase (310 aa).

(6S)-5,6,7,8-tetrahydrofolate is bound at residue 111 to 114 (SLLP).

This sequence belongs to the Fmt family.

It catalyses the reaction L-methionyl-tRNA(fMet) + (6R)-10-formyltetrahydrofolate = N-formyl-L-methionyl-tRNA(fMet) + (6S)-5,6,7,8-tetrahydrofolate + H(+). Functionally, attaches a formyl group to the free amino group of methionyl-tRNA(fMet). The formyl group appears to play a dual role in the initiator identity of N-formylmethionyl-tRNA by promoting its recognition by IF2 and preventing the misappropriation of this tRNA by the elongation apparatus. This is Methionyl-tRNA formyltransferase from Nitrobacter hamburgensis (strain DSM 10229 / NCIMB 13809 / X14).